The chain runs to 450 residues: Calcium-binding and coiled-coil domain-containing protein 2 (450 aa).

Residues 133-136 carry the CLIR motif; that stretch reads ILVV. The stretch at 135–349 forms a coiled coil; the sequence is VVTTQSEVEE…RENNRLLSYM (215 aa). The LIR-like signature appears at 203 to 206; sequence DCWE. The interval 371–381 is interaction with LGALS8; it reads DPGLVFGNPYS. The tract at residues 395 to 450 is interaction with MYO6; the sequence is KKCPTCKSDFAADVFDHNLALEQHLQTLSLNCPICDKTFPAKEKQIFEDHVFCHTL. A UBZ1-type zinc finger spans residues 423–448; that stretch reads SLNCPICDKTFPAKEKQIFEDHVFCH. Zn(2+)-binding residues include Cys-426, Cys-429, His-444, and His-448.

It belongs to the CALCOCO family. As to quaternary structure, dimer. Part of a complex consisting of CALCOCO2, TAX1BP1 and MYO6. Interacts with GEMIN4. Interacts with ATG8 family members MAP1LC3A, MAP1LC3B, GABARAP, GABARAPL1 and GABARAPL2. Interacts with ATG8 family member MAP1LC3C. Interacts with LGALS8. Interacts with TOM1; the interaction is indirect and is mediated by MYO6, which acts as a bridge between TOM1 and CALCOCO2. Interacts with AZI2.

The protein resides in the cytoplasm. Its subcellular location is the perinuclear region. It is found in the cytoskeleton. The protein localises to the cytoplasmic vesicle. It localises to the autophagosome membrane. Its function is as follows. Xenophagy-specific receptor required for autophagy-mediated intracellular bacteria degradation. Acts as an effector protein of galectin-sensed membrane damage that restricts the proliferation of infecting pathogens upon entry into the cytosol by targeting LGALS8-associated bacteria for autophagy. Initially orchestrates bacteria targeting to autophagosomes and subsequently ensures pathogen degradation by regulating pathogen-containing autophagosome maturation. Bacteria targeting to autophagosomes relies on its interaction with MAP1LC3A, MAP1LC3B and/or GABARAPL2, whereas regulation of pathogen-containing autophagosome maturation requires the interaction with MAP3LC3C. May play a role in ruffle formation and actin cytoskeleton organization and seems to negatively regulate constitutive secretion. The polypeptide is Calcium-binding and coiled-coil domain-containing protein 2 (Bos taurus (Bovine)).